The following is a 109-amino-acid chain: Movement protein TGB2 (109 aa).

At 1–9 (MPLTPPPDF) the chain is on the cytoplasmic side. Residues 10–30 (TKVYLSAALGVSLALVVWLLI) traverse the membrane as a helical segment. Residues 31 to 72 (RSTLPVVGDRDHNLPHGGWYRDGTKSVFYNSPGRLNSIEARK) are Lumenal-facing. Residues 73–93 (APLLGQPWAIVVLLVLLIWAS) form a helical membrane-spanning segment. Over 94 to 109 (HKLGRPNCRACAGSHT) the chain is Cytoplasmic.

It belongs to the Tymovirales TGBp2 protein family.

It is found in the host endoplasmic reticulum membrane. Its function is as follows. Plays a role in viral cell-to-cell propagation, by facilitating genome transport to neighboring plant cells through plasmosdesmata,. The polypeptide is Movement protein TGB2 (Solanum tuberosum (Potato)).